The sequence spans 325 residues: Gibberellin 20-oxidase-like protein (325 aa).

Residues 152–266 form the Fe2OG dioxygenase domain; it reads CHGYFRINNY…RFSLAFFWCF (115 aa). Positions 186, 188, and 244 each coordinate Fe cation. Arginine 257 is a 2-oxoglutarate binding site.

This sequence belongs to the iron/ascorbate-dependent oxidoreductase family. GA20OX subfamily. Fe(2+) serves as cofactor. As to expression, highly expressed in elongation zone of lateral roots.

Its function is as follows. Negative regulator of root hair growth. The protein is Gibberellin 20-oxidase-like protein of Arabidopsis thaliana (Mouse-ear cress).